Reading from the N-terminus, the 108-residue chain is Small ribosomal subunit protein uS17 (108 aa).

This sequence belongs to the universal ribosomal protein uS17 family. As to quaternary structure, part of the 30S ribosomal subunit.

One of the primary rRNA binding proteins, it binds specifically to the 5'-end of 16S ribosomal RNA. The sequence is that of Small ribosomal subunit protein uS17 from Methanocorpusculum labreanum (strain ATCC 43576 / DSM 4855 / Z).